The sequence spans 701 residues: Elongation factor G 2 (701 aa).

The region spanning 8–290 is the tr-type G domain; that stretch reads NRYRNIGIVA…AVIEFLPAPA (283 aa). GTP-binding positions include 17-24, 88-92, and 142-145; these read AHVDAGKT, DTPGH, and NKMD.

The protein belongs to the TRAFAC class translation factor GTPase superfamily. Classic translation factor GTPase family. EF-G/EF-2 subfamily.

It localises to the cytoplasm. Functionally, catalyzes the GTP-dependent ribosomal translocation step during translation elongation. During this step, the ribosome changes from the pre-translocational (PRE) to the post-translocational (POST) state as the newly formed A-site-bound peptidyl-tRNA and P-site-bound deacylated tRNA move to the P and E sites, respectively. Catalyzes the coordinated movement of the two tRNA molecules, the mRNA and conformational changes in the ribosome. The chain is Elongation factor G 2 from Pseudoalteromonas atlantica (strain T6c / ATCC BAA-1087).